A 384-amino-acid polypeptide reads, in one-letter code: Formate-dependent phosphoribosylglycinamide formyltransferase (384 aa).

Residues 14 to 15 (EL) and glutamate 74 each bind N(1)-(5-phospho-beta-D-ribosyl)glycinamide. Residues arginine 106, lysine 147, 152-157 (SSGKGQ), 187-190 (EEFI), and glutamate 195 contribute to the ATP site. The ATP-grasp domain occupies 111–300 (RLAAETLGLA…EFALHVRAIL (190 aa)). 2 residues coordinate Mg(2+): glutamate 259 and glutamate 271. Residues aspartate 278, lysine 348, and 355 to 356 (RR) contribute to the N(1)-(5-phospho-beta-D-ribosyl)glycinamide site.

Belongs to the PurK/PurT family. As to quaternary structure, homodimer.

The catalysed reaction is N(1)-(5-phospho-beta-D-ribosyl)glycinamide + formate + ATP = N(2)-formyl-N(1)-(5-phospho-beta-D-ribosyl)glycinamide + ADP + phosphate + H(+). The protein operates within purine metabolism; IMP biosynthesis via de novo pathway; N(2)-formyl-N(1)-(5-phospho-D-ribosyl)glycinamide from N(1)-(5-phospho-D-ribosyl)glycinamide (formate route): step 1/1. Functionally, catalyzes two reactions: the first one is the production of beta-formyl glycinamide ribonucleotide (GAR) from formate, ATP and beta GAR; the second, a side reaction, is the production of acetyl phosphate and ADP from acetate and ATP. Its function is as follows. Involved in the de novo purine biosynthesis. Catalyzes the transfer of formate to 5-phospho-ribosyl-glycinamide (GAR), producing 5-phospho-ribosyl-N-formylglycinamide (FGAR). Formate is provided by PurU via hydrolysis of 10-formyl-tetrahydrofolate. The sequence is that of Formate-dependent phosphoribosylglycinamide formyltransferase from Bacillus subtilis (strain 168).